Here is a 477-residue protein sequence, read N- to C-terminus: Adenylyl cyclase-associated protein 2 (477 aa).

A2 carries the N-acetylalanine modification. 2 disordered regions span residues 224–261 and 274–323; these read VLSS…PSRS and TKGL…KHAP. A compositionally biased stretch (pro residues) spans 230-246; sequence GLPPPPPPPPPPGPPPL. Phosphoserine is present on residues S301 and S309. Residues 301-320 show a composition bias toward low complexity; sequence SPTKSHTPSPTSPKSYPSQK. A C-CAP/cofactor C-like domain is found at 317–455; it reads PSQKHAPVLE…QDGDYREFPI (139 aa).

The protein belongs to the CAP family.

It is found in the cell membrane. Involved in the regulation of actin polymerization. This is Adenylyl cyclase-associated protein 2 (CAP2) from Pongo abelii (Sumatran orangutan).